A 376-amino-acid chain; its full sequence is Meiotically up-regulated gene 183 protein (376 aa).

Residues 334 to 376 are disordered; it reads SLENVDDMDDIDVKEPLFSDNDEDVENSDSEDGSESIGSEDEE. Residues 353 to 376 are compositionally biased toward acidic residues; the sequence is DNDEDVENSDSEDGSESIGSEDEE.

This sequence belongs to the RTT106 family.

Functionally, has a role in meiosis. The polypeptide is Meiotically up-regulated gene 183 protein (mug183) (Schizosaccharomyces pombe (strain 972 / ATCC 24843) (Fission yeast)).